Here is a 607-residue protein sequence, read N- to C-terminus: UvrABC system protein C (607 aa).

The region spanning 16–94 (GRPGVYRMFD…IKEWRPPYNI (79 aa)) is the GIY-YIG domain. The UVR domain occupies 203-238 (NALSDELNASMEKAAMALDFERAAELRDQVALLRRV).

The protein belongs to the UvrC family. In terms of assembly, interacts with UvrB in an incision complex.

The protein localises to the cytoplasm. In terms of biological role, the UvrABC repair system catalyzes the recognition and processing of DNA lesions. UvrC both incises the 5' and 3' sides of the lesion. The N-terminal half is responsible for the 3' incision and the C-terminal half is responsible for the 5' incision. This is UvrABC system protein C from Pseudomonas syringae pv. tomato (strain ATCC BAA-871 / DC3000).